Here is a 289-residue protein sequence, read N- to C-terminus: 4-diphosphocytidyl-2-C-methyl-D-erythritol kinase (289 aa).

The active site involves K10. 94-104 lines the ATP pocket; that stretch reads PVAAGLAGGSS. D136 is an active-site residue.

This sequence belongs to the GHMP kinase family. IspE subfamily.

The catalysed reaction is 4-CDP-2-C-methyl-D-erythritol + ATP = 4-CDP-2-C-methyl-D-erythritol 2-phosphate + ADP + H(+). It participates in isoprenoid biosynthesis; isopentenyl diphosphate biosynthesis via DXP pathway; isopentenyl diphosphate from 1-deoxy-D-xylulose 5-phosphate: step 3/6. In terms of biological role, catalyzes the phosphorylation of the position 2 hydroxy group of 4-diphosphocytidyl-2C-methyl-D-erythritol. In Bacillus anthracis, this protein is 4-diphosphocytidyl-2-C-methyl-D-erythritol kinase.